The primary structure comprises 351 residues: UDP-3-O-acylglucosamine N-acyltransferase (351 aa).

The active-site Proton acceptor is the histidine 240.

The protein belongs to the transferase hexapeptide repeat family. LpxD subfamily. In terms of assembly, homotrimer.

The enzyme catalyses a UDP-3-O-[(3R)-3-hydroxyacyl]-alpha-D-glucosamine + a (3R)-hydroxyacyl-[ACP] = a UDP-2-N,3-O-bis[(3R)-3-hydroxyacyl]-alpha-D-glucosamine + holo-[ACP] + H(+). The protein operates within bacterial outer membrane biogenesis; LPS lipid A biosynthesis. Functionally, catalyzes the N-acylation of UDP-3-O-acylglucosamine using 3-hydroxyacyl-ACP as the acyl donor. Is involved in the biosynthesis of lipid A, a phosphorylated glycolipid that anchors the lipopolysaccharide to the outer membrane of the cell. The polypeptide is UDP-3-O-acylglucosamine N-acyltransferase (Ectopseudomonas mendocina (strain ymp) (Pseudomonas mendocina)).